A 186-amino-acid polypeptide reads, in one-letter code: Ribosome-recycling factor (186 aa).

Belongs to the RRF family.

It localises to the cytoplasm. In terms of biological role, responsible for the release of ribosomes from messenger RNA at the termination of protein biosynthesis. May increase the efficiency of translation by recycling ribosomes from one round of translation to another. The chain is Ribosome-recycling factor from Allorhizobium ampelinum (strain ATCC BAA-846 / DSM 112012 / S4) (Agrobacterium vitis (strain S4)).